A 370-amino-acid chain; its full sequence is Aminomethyltransferase (370 aa).

This sequence belongs to the GcvT family. The glycine cleavage system is composed of four proteins: P, T, L and H.

It carries out the reaction N(6)-[(R)-S(8)-aminomethyldihydrolipoyl]-L-lysyl-[protein] + (6S)-5,6,7,8-tetrahydrofolate = N(6)-[(R)-dihydrolipoyl]-L-lysyl-[protein] + (6R)-5,10-methylene-5,6,7,8-tetrahydrofolate + NH4(+). The glycine cleavage system catalyzes the degradation of glycine. In Prochlorococcus marinus (strain MIT 9301), this protein is Aminomethyltransferase.